A 344-amino-acid polypeptide reads, in one-letter code: Dihydroorotase (344 aa).

Zn(2+) contacts are provided by H14 and H16. Residues 16–18 (HFR) and N42 contribute to the substrate site. Positions 100, 137, and 175 each coordinate Zn(2+). K100 is modified (N6-carboxylysine). Substrate is bound at residue H137. Residue L220 participates in substrate binding. A Zn(2+)-binding site is contributed by D248. Residue D248 is part of the active site. Substrate is bound by residues H252 and A264.

The protein belongs to the metallo-dependent hydrolases superfamily. DHOase family. Class II DHOase subfamily. As to quaternary structure, homodimer. Zn(2+) is required as a cofactor.

It catalyses the reaction (S)-dihydroorotate + H2O = N-carbamoyl-L-aspartate + H(+). Its pathway is pyrimidine metabolism; UMP biosynthesis via de novo pathway; (S)-dihydroorotate from bicarbonate: step 3/3. Functionally, catalyzes the reversible cyclization of carbamoyl aspartate to dihydroorotate. In Alcanivorax borkumensis (strain ATCC 700651 / DSM 11573 / NCIMB 13689 / SK2), this protein is Dihydroorotase.